The chain runs to 129 residues: Follitropin subunit beta (129 aa).

The signal sequence occupies residues 1-20 (MKTLQFFFLFCCWKAICCNS). Cystine bridges form between Cys-21/Cys-69, Cys-35/Cys-84, Cys-38/Cys-122, Cys-46/Cys-100, Cys-50/Cys-102, and Cys-105/Cys-112. N-linked (GlcNAc...) asparagine glycans are attached at residues Asn-25 and Asn-42.

This sequence belongs to the glycoprotein hormones subunit beta family. As to quaternary structure, heterodimer. The active follitropin is a heterodimer composed of an alpha chain/CGA shared with other hormones and a unique beta chain/FSHB shown here.

It is found in the secreted. In terms of biological role, together with the alpha chain CGA constitutes follitropin, the follicle-stimulating hormone, and provides its biological specificity to the hormone heterodimer. Binds FSHR, a G protein-coupled receptor, on target cells to activate downstream signaling pathways. Follitropin is involved in follicle development and spermatogenesis in reproductive organs. In Gorilla gorilla gorilla (Western lowland gorilla), this protein is Follitropin subunit beta (FSHB).